The chain runs to 398 residues: Carbamoyl phosphate synthase small chain (398 aa).

CPSase stretches follow at residues Met1 to Ala205 and Met1 to Asn207. The L-glutamine site is built by Ser60, Gly257, and Gly259. A Glutamine amidotransferase type-1 domain is found at His209 to Thr397. The active-site Nucleophile is Cys286. L-glutamine contacts are provided by Leu287, Gln290, Asn328, Gly330, and Phe331. Residues His370 and Glu372 contribute to the active site.

Belongs to the CarA family. Composed of two chains; the small (or glutamine) chain promotes the hydrolysis of glutamine to ammonia, which is used by the large (or ammonia) chain to synthesize carbamoyl phosphate. Tetramer of heterodimers (alpha,beta)4.

It carries out the reaction hydrogencarbonate + L-glutamine + 2 ATP + H2O = carbamoyl phosphate + L-glutamate + 2 ADP + phosphate + 2 H(+). The catalysed reaction is L-glutamine + H2O = L-glutamate + NH4(+). It participates in amino-acid biosynthesis; L-arginine biosynthesis; carbamoyl phosphate from bicarbonate: step 1/1. It functions in the pathway pyrimidine metabolism; UMP biosynthesis via de novo pathway; (S)-dihydroorotate from bicarbonate: step 1/3. Its function is as follows. Small subunit of the glutamine-dependent carbamoyl phosphate synthetase (CPSase). CPSase catalyzes the formation of carbamoyl phosphate from the ammonia moiety of glutamine, carbonate, and phosphate donated by ATP, constituting the first step of 2 biosynthetic pathways, one leading to arginine and/or urea and the other to pyrimidine nucleotides. The small subunit (glutamine amidotransferase) binds and cleaves glutamine to supply the large subunit with the substrate ammonia. This Bartonella quintana (strain Toulouse) (Rochalimaea quintana) protein is Carbamoyl phosphate synthase small chain.